Reading from the N-terminus, the 537-residue chain is MGLLLLVLILTPLLAAYRHPDFPLLEKAQQLLQSTGSPYSTNCWLCTSSSTETPGTAYPASPREWTSIEAELHISYQWDPNLKGLMTPANSLLSTVKQDFPDIRQKPPIFGPIFTNINLMGKAPICVTAKRKNGTNVGTLPSTVCNVTFTVDPNQQTYQTYTHNQFRHQPRFPKPPNITFPQGTLLDKSTQFCQGRPSSCRTRNFWFRPADYNQCLQIPNLSSPAEWVLLDQTRNSLFWENKTKGANQSQTPCIQVLAGMTIATSYLGISPVSEFFGTSLTPLFHFHISTCLKTQGAFYICGQSIHQCLPTNWTGTCTIGYVTPDIFIAPGNLSLPIPIYGNSQLPRARRAIHFIPLLAGLGILAGTGTGIAGITKASFTYSQLSKEIAKNIDTMAKTLTTVQEQIDSLAAVVLQNRRGLDMLTAAQGGICLALDEKCCFWVNQSGKVQDNIRQLLNQASSLRERATQGWLNWEGTWKWFSWVLPFIGPLVSLLLLLLFGPCLLNLITQFVSSRLQAIKLQTNGAGCRPRNIQESPF.

The N-terminal stretch at 1–15 (MGLLLLVLILTPLLA) is a signal peptide. At 16–478 (AYRHPDFPLL…GWLNWEGTWK (463 aa)) the chain is on the extracellular side. The CXXC signature appears at 43–46 (CWLC). 3 cysteine pairs are disulfide-bonded: cysteine 43-cysteine 46, cysteine 43-cysteine 439, and cysteine 431-cysteine 438. Asparagine 133, asparagine 146, asparagine 177, asparagine 220, asparagine 241, asparagine 247, asparagine 312, and asparagine 332 each carry an N-linked (GlcNAc...) asparagine glycan. Residues 354–374 (FIPLLAGLGILAGTGTGIAGI) are fusion peptide. The CKS-17 signature appears at 414–430 (LQNRRGLDMLTAAQGGI). The CX6CC signature appears at 431–439 (CLALDEKCC). Asparagine 443 carries an N-linked (GlcNAc...) asparagine glycan. The helical transmembrane segment at 479–499 (WFSWVLPFIGPLVSLLLLLLF) threads the bilayer. The Cytoplasmic segment spans residues 500-537 (GPCLLNLITQFVSSRLQAIKLQTNGAGCRPRNIQESPF).

The protein belongs to the gamma type-C retroviral envelope protein family. HERV class-I FRD env subfamily. The surface and transmembrane proteins form a heterodimer. They are attached by non-covalent interactions or by a labile interchain disulfide bond. Post-translationally, specific enzymatic cleavages in vivo yield the mature SU and TM proteins. The CXXC motif is highly conserved across a broad range of retroviral envelope proteins. It is thought to participate in the formation of a labile disulfide bond possibly with the CX6CC motif present in the transmembrane protein.

It is found in the virion. The protein resides in the cell membrane. In terms of biological role, this endogenous retroviral envelope protein has retained its original fusogenic properties and participates in trophoblast fusion and the formation of a syncytium during placenta morphogenesis. The interaction with MFSD2A is apparently important for this process. Its function is as follows. Endogenous envelope proteins may have kept, lost or modified their original function during evolution but this one can still make pseudotypes with MLV, HIV-1 or SIV-1 virions and confer infectivity. Retroviral envelope proteins mediate receptor recognition and membrane fusion during early infection. The surface protein mediates receptor recognition, while the transmembrane protein anchors the envelope heterodimer to the viral membrane through one transmembrane domain. The other hydrophobic domain, called fusion peptide, mediates fusion of the viral membrane with the target cell membrane. This chain is Syncytin-2 (ERVFRD-1), found in Macaca fascicularis (Crab-eating macaque).